Here is an 878-residue protein sequence, read N- to C-terminus: Alanine--tRNA ligase (878 aa).

Zn(2+)-binding residues include His566, His570, Cys668, and His672.

Belongs to the class-II aminoacyl-tRNA synthetase family. Zn(2+) is required as a cofactor.

The protein resides in the cytoplasm. The catalysed reaction is tRNA(Ala) + L-alanine + ATP = L-alanyl-tRNA(Ala) + AMP + diphosphate. Catalyzes the attachment of alanine to tRNA(Ala) in a two-step reaction: alanine is first activated by ATP to form Ala-AMP and then transferred to the acceptor end of tRNA(Ala). Also edits incorrectly charged Ser-tRNA(Ala) and Gly-tRNA(Ala) via its editing domain. This Geobacillus thermodenitrificans (strain NG80-2) protein is Alanine--tRNA ligase.